A 782-amino-acid chain; its full sequence is E3 ubiquitin-protein ligase SopA (782 aa).

The tract at residues 136 to 171 (GVSVSANNRPTVSEGRTPPVSPSLSLQATSSPSSPA) is disordered. Residues 157-171 (PSLSLQATSSPSSPA) are compositionally biased toward low complexity. Catalysis depends on Cys753, which acts as the Glycyl thioester intermediate.

Belongs to the SopA E3 ligase family. In terms of processing, ubiquitinated in the presence of host E1 ubiquitin-activating enzyme, E2 ubiquitin-conjugating enzyme and ubiquitin.

The protein localises to the secreted. It localises to the host cell. The catalysed reaction is S-ubiquitinyl-[E2 ubiquitin-conjugating enzyme]-L-cysteine + [acceptor protein]-L-lysine = [E2 ubiquitin-conjugating enzyme]-L-cysteine + N(6)-ubiquitinyl-[acceptor protein]-L-lysine.. Functionally, effector proteins function to alter host cell physiology and promote bacterial survival in host tissues. This protein is an E3 ubiquitin ligase that interferes with host's ubiquitination pathway. For instance, prevents host innate immune response by ubiquitinating and thus sending to degradation host E3 ubiquitin ligases TRIM56 and TRIM65. This chain is E3 ubiquitin-protein ligase SopA (sopA), found in Salmonella typhimurium (strain D23580).